Here is a 439-residue protein sequence, read N- to C-terminus: Innexin-19 (439 aa).

Transmembrane regions (helical) follow at residues 33 to 53, 103 to 123, 199 to 219, and 285 to 305; these read PLIL…GTPI, QWVP…CIFW, IVYS…FFIL, and VFAF…CSFI.

It belongs to the pannexin family.

It is found in the cell membrane. It localises to the cell junction. The protein localises to the gap junction. Functionally, structural component of the gap junctions that specifically coordinates left-right asymmetry in the developing nervous system. Acts by forming gap junction network linking embryonic neurons and providing electrical coupling between cells, leading to promote or inhibit AWC signaling. This chain is Innexin-19 (inx-19), found in Caenorhabditis briggsae.